The chain runs to 182 residues: ATP synthase subunit delta (182 aa).

The protein belongs to the ATPase delta chain family. In terms of assembly, F-type ATPases have 2 components, F(1) - the catalytic core - and F(0) - the membrane proton channel. F(1) has five subunits: alpha(3), beta(3), gamma(1), delta(1), epsilon(1). CF(0) has four main subunits: a(1), b(1), b'(1) and c(10-14). The alpha and beta chains form an alternating ring which encloses part of the gamma chain. F(1) is attached to F(0) by a central stalk formed by the gamma and epsilon chains, while a peripheral stalk is formed by the delta, b and b' chains.

Its subcellular location is the cellular thylakoid membrane. In terms of biological role, f(1)F(0) ATP synthase produces ATP from ADP in the presence of a proton or sodium gradient. F-type ATPases consist of two structural domains, F(1) containing the extramembraneous catalytic core and F(0) containing the membrane proton channel, linked together by a central stalk and a peripheral stalk. During catalysis, ATP synthesis in the catalytic domain of F(1) is coupled via a rotary mechanism of the central stalk subunits to proton translocation. Functionally, this protein is part of the stalk that links CF(0) to CF(1). It either transmits conformational changes from CF(0) to CF(1) or is implicated in proton conduction. This is ATP synthase subunit delta from Synechococcus sp. (strain JA-2-3B'a(2-13)) (Cyanobacteria bacterium Yellowstone B-Prime).